A 58-amino-acid chain; its full sequence is NADH dehydrogenase [ubiquinone] 1 beta subcomplex subunit 1 (58 aa).

A helical membrane pass occupies residues 11–27 (HWVHVLVPMGFVIGCYL).

It belongs to the complex I NDUFB1 subunit family. In terms of assembly, complex I is composed of 45 different subunits.

Its subcellular location is the mitochondrion inner membrane. Its function is as follows. Accessory subunit of the mitochondrial membrane respiratory chain NADH dehydrogenase (Complex I) that is believed not to be involved in catalysis. Complex I functions in the transfer of electrons from NADH to the respiratory chain. The immediate electron acceptor for the enzyme is believed to be ubiquinone. This is NADH dehydrogenase [ubiquinone] 1 beta subcomplex subunit 1 (NDUFB1) from Homo sapiens (Human).